Reading from the N-terminus, the 487-residue chain is ATP synthase subunit beta 1 (487 aa).

ATP is bound at residue 162-169; sequence GGAGVGKT.

It belongs to the ATPase alpha/beta chains family. In terms of assembly, F-type ATPases have 2 components, CF(1) - the catalytic core - and CF(0) - the membrane proton channel. CF(1) has five subunits: alpha(3), beta(3), gamma(1), delta(1), epsilon(1). CF(0) has three main subunits: a(1), b(2) and c(9-12). The alpha and beta chains form an alternating ring which encloses part of the gamma chain. CF(1) is attached to CF(0) by a central stalk formed by the gamma and epsilon chains, while a peripheral stalk is formed by the delta and b chains.

Its subcellular location is the cell inner membrane. The catalysed reaction is ATP + H2O + 4 H(+)(in) = ADP + phosphate + 5 H(+)(out). In terms of biological role, produces ATP from ADP in the presence of a proton gradient across the membrane. The catalytic sites are hosted primarily by the beta subunits. This is ATP synthase subunit beta 1 from Gluconobacter oxydans (strain 621H) (Gluconobacter suboxydans).